Consider the following 223-residue polypeptide: Deoxyribose-phosphate aldolase (223 aa).

The active-site Proton donor/acceptor is Asp-89. Residue Lys-152 is the Schiff-base intermediate with acetaldehyde of the active site. Lys-181 (proton donor/acceptor) is an active-site residue.

The protein belongs to the DeoC/FbaB aldolase family. DeoC type 1 subfamily.

It is found in the cytoplasm. It catalyses the reaction 2-deoxy-D-ribose 5-phosphate = D-glyceraldehyde 3-phosphate + acetaldehyde. The protein operates within carbohydrate degradation; 2-deoxy-D-ribose 1-phosphate degradation; D-glyceraldehyde 3-phosphate and acetaldehyde from 2-deoxy-alpha-D-ribose 1-phosphate: step 2/2. In terms of biological role, catalyzes a reversible aldol reaction between acetaldehyde and D-glyceraldehyde 3-phosphate to generate 2-deoxy-D-ribose 5-phosphate. This is Deoxyribose-phosphate aldolase from Bacillus mycoides (strain KBAB4) (Bacillus weihenstephanensis).